The sequence spans 1367 residues: DNA polymerase III PolC-type (1367 aa).

Residues phenylalanine 358–phenylalanine 513 enclose the Exonuclease domain.

The protein belongs to the DNA polymerase type-C family. PolC subfamily.

The protein resides in the cytoplasm. The enzyme catalyses DNA(n) + a 2'-deoxyribonucleoside 5'-triphosphate = DNA(n+1) + diphosphate. Its function is as follows. Required for replicative DNA synthesis. This DNA polymerase also exhibits 3' to 5' exonuclease activity. This chain is DNA polymerase III PolC-type, found in Thermotoga petrophila (strain ATCC BAA-488 / DSM 13995 / JCM 10881 / RKU-1).